Consider the following 308-residue polypeptide: Ribonuclease 3 (308 aa).

An RNase III domain is found at Tyr20 to Gly145. Position 62 (Glu62) interacts with Mg(2+). Asp66 is an active-site residue. Mg(2+)-binding residues include Asn131 and Glu134. The active site involves Glu134. The region spanning Asn173–Asn242 is the DRBM domain. Residues Gln261 to Leu281 are disordered.

This sequence belongs to the ribonuclease III family. As to quaternary structure, homodimer. Mg(2+) serves as cofactor.

It is found in the cytoplasm. It carries out the reaction Endonucleolytic cleavage to 5'-phosphomonoester.. Its function is as follows. Digests double-stranded RNA. Involved in the processing of primary rRNA transcript to yield the immediate precursors to the large and small rRNAs (23S and 16S). Processes some mRNAs, and tRNAs when they are encoded in the rRNA operon. Processes pre-crRNA and tracrRNA of type II CRISPR loci if present in the organism. The sequence is that of Ribonuclease 3 from Phocaeicola vulgatus (strain ATCC 8482 / DSM 1447 / JCM 5826 / CCUG 4940 / NBRC 14291 / NCTC 11154) (Bacteroides vulgatus).